The sequence spans 246 residues: Polyhedrin (246 aa).

Belongs to the polyhedrin family.

Its function is as follows. Major component of the virus occlusion bodies, which are large proteinaceous structures (polyhedra), that protect the virus from the outside environment for extended periods until they are ingested by insect larvae. This is Polyhedrin (PH) from Spodoptera exigua nuclear polyhedrosis virus (strain US) (SeMNPV).